The sequence spans 540 residues: Ecdysone 20-monooxygenase (540 aa).

A heme-binding site is contributed by C488.

Belongs to the cytochrome P450 family. Heme serves as cofactor. In terms of tissue distribution, strong expression by embryonic stage 10 in epidermis, decreases significantly in older embryos. Third instar larvae show expression in the midgut copper cells, Malpighian tubules and fat body. In the adult ovaries, expression is seen in both nurse cells and centripetally migrating follicle cells.

Its subcellular location is the mitochondrion membrane. It carries out the reaction ecdysone + AH2 + O2 = 20-hydroxyecdysone + A + H2O. Its pathway is steroid biosynthesis; ecdysteroid biosynthesis. In terms of biological role, required for CNS development; midline glial cells. Involved in the metabolism of insect hormones; responsible for all ecdysone 20-monooxygenase activity during embryonic, larval and adult stages. May be involved in the breakdown of synthetic insecticides. The polypeptide is Ecdysone 20-monooxygenase (shd) (Drosophila melanogaster (Fruit fly)).